The sequence spans 834 residues: Serine-rich coiled-coil domain-containing protein 2 (834 aa).

Positions 169 to 212 (PKSQLNGFYGNRSAGSMQRPRANSCATRSSSGESLAQSPDSSKS) are disordered. Polar residues predominate over residues 192–212 (SCATRSSSGESLAQSPDSSKS). Ser223 is modified (phosphoserine). Basic and acidic residues predominate over residues 426–443 (RTRITPEEMSLKEEKHEN). Disordered stretches follow at residues 426-454 (RTRI…DSPK), 477-509 (CTKH…SSDG), 573-628 (NMNR…SPYR), 695-714 (LHDI…GDKV), and 780-834 (APSF…RGPQ). Ser452 is subject to Phosphoserine. The segment covering 497–507 (SSFELSPSDSS) has biased composition (low complexity). Composition is skewed to basic and acidic residues over residues 573–584 (NMNRFDRPDRNV) and 601–611 (GQEHYHLSHPD). The stretch at 712–749 (DKVYKNEDLLNEIKQLKDEIKKKDEKIQLLELQLATQH) forms a coiled coil. Composition is skewed to polar residues over residues 781 to 790 (PSFSPWQGSF) and 804 to 816 (TSST…PSQT).

Belongs to the CCSER family.

It localises to the cytoplasm. It is found in the cytoskeleton. In terms of biological role, microtubule-binding protein which might play a role in microtubule bundling. The protein is Serine-rich coiled-coil domain-containing protein 2 (CCSER2) of Homo sapiens (Human).